We begin with the raw amino-acid sequence, 326 residues long: Polycomb complex protein BMI-1 (326 aa).

The segment at 18-57 adopts an RING-type zinc-finger fold; the sequence is CVLCGGYFIDATTIIECLHSFCKTCIVRYLETSKYCPICD. Residues 81 to 95 carry the Nuclear localization signal motif; the sequence is KLVPGLFKNEMKRRR. Residues 162–182 are interaction with PHC2; that stretch reads RYLRCPAAMTVMHLRKFLRSK. An interaction with E4F1 region spans residues 164 to 228; it reads LRCPAAMTVM…GPLPLKYRVR (65 aa). The segment at 236-326 is disordered; sequence ISHQRDGLTN…VNGSSATSSG (91 aa). Positions 266–278 are enriched in low complexity; sequence PSTSSCLPSPSTP. Residues 279–309 show a composition bias toward polar residues; it reads VQSPHPQFPHISSTMNGTSNSPSGNHQSSFA. A compositionally biased stretch (low complexity) spans 315–326; it reads SSVNGSSATSSG.

Component of a PRC1-like complex. Identified in a PRC1-like HPRC-H complex with CBX2, CBX4, CBX8, PHC1, PHC2, PHC3 RING1 and RNF2. Interacts with RNF2/RING2. Interacts with RING1. Part of a complex that contains RNF2, UB2D3 and BMI1, where RNF2 and BMI1 form a tight heterodimer, and UB2D3 interacts only with RNF2. The complex composed of RNF2, UB2D3 and BMI1 binds nucleosomes, and has activity only with nucleosomal histone H2A. Interacts with CBX7 and CBX8. Interacts with SPOP. Part of a complex consisting of BMI1, CUL3 and SPOP. Interacts with E4F1. Interacts with PHC2. Interacts with zinc finger protein ZNF277. May be part of a complex including at least ZNF277, BMI1 and RNF2/RING2. Monoubiquitinated. May be polyubiquitinated; which does not lead to proteasomal degradation.

Its subcellular location is the nucleus. The protein localises to the cytoplasm. Component of a Polycomb group (PcG) multiprotein PRC1-like complex, a complex class required to maintain the transcriptionally repressive state of many genes, including Hox genes, throughout development. PcG PRC1 complex acts via chromatin remodeling and modification of histones; it mediates monoubiquitination of histone H2A 'Lys-119', rendering chromatin heritably changed in its expressibility. The complex composed of RNF2, UB2D3 and BMI1 binds nucleosomes, and has activity only with nucleosomal histone H2A. In the PRC1-like complex, regulates the E3 ubiquitin-protein ligase activity of RNF2/RING2. In Homo sapiens (Human), this protein is Polycomb complex protein BMI-1 (BMI1).